Reading from the N-terminus, the 460-residue chain is Zinc transporter 6 (460 aa).

Residues 1 to 33 (MGTIHLFRKSQRSLVGKLTHEFRLVAADRRSWK) are Cytoplasmic-facing. Residues 34–54 (ILLFGAINLICIGFLLMWCSS) traverse the membrane as a helical segment. The Extracellular portion of the chain corresponds to 55 to 64 (TNSIALTAYT). A helical transmembrane segment spans residues 65–85 (YLTIFDLFSLITCLISYWVMV). The Cytoplasmic portion of the chain corresponds to 86–98 (KKPSPVYSFGFER). Residues 99 to 119 (FEVLAVFASTVLAQLGALFIL) traverse the membrane as a helical segment. At 120 to 134 (KESAERFLEQPEIHT) the chain is on the extracellular side. A helical membrane pass occupies residues 135-155 (GRLLVGTFVALFFNLFTMLSV). Topologically, residues 156–200 (RNKPFAYVSEAASTSWLQEHVADLSRSICGIIPGLSSIFLPRMNP) are cytoplasmic. Residues 201–221 (FVLIDIAGALALCITYMLIEI) traverse the membrane as a helical segment. Residues 222-228 (NNYYAVD) are Extracellular-facing. The chain crosses the membrane as a helical span at residues 229 to 249 (TASAIAIALMTFGTMYPMSVY). At 250-460 (SGKVLLQTTP…GTNTRGQSRP (211 aa)) the chain is on the cytoplasmic side. The disordered stretch occupies residues 372–392 (PVTSTPAKPSSPPPEFSFNTP).

The protein belongs to the cation diffusion facilitator (CDF) transporter (TC 2.A.4) family. SLC30A subfamily. As to quaternary structure, heterodimer with SLC30A5; form a functional zinc ion transmembrane transporter.

Its subcellular location is the golgi apparatus. It is found in the trans-Golgi network membrane. Has probably no intrinsic transporter activity but together with SLC30A5 forms a functional zinc ion:proton antiporter heterodimer, mediating zinc entry into the lumen of organelles along the secretory pathway. As part of that zinc ion:proton antiporter, contributes to zinc ion homeostasis within the early secretory pathway and regulates the activation and folding of enzymes like alkaline phosphatases and enzymes involved in phosphatidylinositol glycan anchor biosynthesis. The protein is Zinc transporter 6 (SLC30A6) of Gallus gallus (Chicken).